An 880-amino-acid chain; its full sequence is DNA mismatch repair protein MutS (880 aa).

ATP is bound at residue 635-642; that stretch reads GPNMGGKS.

This sequence belongs to the DNA mismatch repair MutS family.

Its function is as follows. This protein is involved in the repair of mismatches in DNA. It is possible that it carries out the mismatch recognition step. This protein has a weak ATPase activity. The chain is DNA mismatch repair protein MutS from Nitrosomonas eutropha (strain DSM 101675 / C91 / Nm57).